The primary structure comprises 75 residues: UPF0270 protein PFL_4336 (75 aa).

The protein belongs to the UPF0270 family.

The protein is UPF0270 protein PFL_4336 of Pseudomonas fluorescens (strain ATCC BAA-477 / NRRL B-23932 / Pf-5).